The following is a 423-amino-acid chain: Protein FAM43A (423 aa).

The span at 263–283 (EQELQEEEEEEQPEGCPEEEE) shows a compositional bias: acidic residues. Disordered stretches follow at residues 263 to 298 (EQEL…EAEA), 321 to 344 (RGEA…LLLG), and 382 to 423 (LSGD…PHSG). The segment covering 323-335 (EALGGGGGSLGPG) has biased composition (gly residues). Residues 383–393 (SGDSTGSESSI) show a composition bias toward low complexity. A compositionally biased stretch (polar residues) spans 401 to 411 (TSATAGDSSRQ).

The protein belongs to the FAM43 family.

This chain is Protein FAM43A (FAM43A), found in Homo sapiens (Human).